Consider the following 360-residue polypeptide: Photosystem II protein D1 (360 aa).

The next 3 membrane-spanning stretches (helical) occupy residues 32-49 (YLGWFGCLMVPTLVSATF), 121-136 (HFFIGVCSYLGREWEL), and 145-159 (WIFVAFSAPVAAASA). Residue histidine 121 coordinates chlorophyll a. Tyrosine 129 contributes to the pheophytin a binding site. [CaMn4O5] cluster is bound by residues aspartate 173 and glutamate 192. The helical transmembrane segment at 200-221 (LHMFGVAAVFGGSLFSAMHGSL) threads the bilayer. Histidine 201 contributes to the chlorophyll a binding site. A quinone-binding positions include histidine 218 and 267 to 268 (SF). Histidine 218 provides a ligand contact to Fe cation. Histidine 275 lines the Fe cation pocket. A helical membrane pass occupies residues 277–291 (FLGAWPVVGIWLTAM). [CaMn4O5] cluster-binding residues include histidine 335, glutamate 336, aspartate 345, and alanine 347. Positions 348-360 (CANCLLSLWPMVG) are excised as a propeptide.

Belongs to the reaction center PufL/M/PsbA/D family. As to quaternary structure, PSII is composed of 1 copy each of membrane proteins PsbA, PsbB, PsbC, PsbD, PsbE, PsbF, PsbH, PsbI, PsbJ, PsbK, PsbL, PsbM, PsbT, PsbX, PsbY, PsbZ, Psb30/Ycf12, at least 3 peripheral proteins of the oxygen-evolving complex and a large number of cofactors. It forms dimeric complexes. The cofactor is The D1/D2 heterodimer binds P680, chlorophylls that are the primary electron donor of PSII, and subsequent electron acceptors. It shares a non-heme iron and each subunit binds pheophytin, quinone, additional chlorophylls, carotenoids and lipids. D1 provides most of the ligands for the Mn4-Ca-O5 cluster of the oxygen-evolving complex (OEC). There is also a Cl(-1) ion associated with D1 and D2, which is required for oxygen evolution. The PSII complex binds additional chlorophylls, carotenoids and specific lipids.. Tyr-164 forms a radical intermediate that is referred to as redox-active TyrZ, YZ or Y-Z. In terms of processing, C-terminally processed by CtpA; processing is essential to allow assembly of the oxygen-evolving complex and thus photosynthetic growth.

The protein localises to the plastid. The protein resides in the chloroplast thylakoid membrane. It catalyses the reaction 2 a plastoquinone + 4 hnu + 2 H2O = 2 a plastoquinol + O2. In terms of biological role, photosystem II (PSII) is a light-driven water:plastoquinone oxidoreductase that uses light energy to abstract electrons from H(2)O, generating O(2) and a proton gradient subsequently used for ATP formation. It consists of a core antenna complex that captures photons, and an electron transfer chain that converts photonic excitation into a charge separation. The D1/D2 (PsbA/PsbD) reaction center heterodimer binds P680, the primary electron donor of PSII as well as several subsequent electron acceptors. The polypeptide is Photosystem II protein D1 (Karenia mikimotoi (Red tide dinoflagellate)).